A 305-amino-acid chain; its full sequence is Ribonuclease Z (305 aa).

7 residues coordinate Zn(2+): His-61, His-63, Asp-65, His-66, His-141, Asp-209, and His-268. The Proton acceptor role is filled by Asp-65.

It belongs to the RNase Z family. Homodimer. Zn(2+) serves as cofactor.

The catalysed reaction is Endonucleolytic cleavage of RNA, removing extra 3' nucleotides from tRNA precursor, generating 3' termini of tRNAs. A 3'-hydroxy group is left at the tRNA terminus and a 5'-phosphoryl group is left at the trailer molecule.. Zinc phosphodiesterase, which displays some tRNA 3'-processing endonuclease activity. Probably involved in tRNA maturation, by removing a 3'-trailer from precursor tRNA. This Clostridioides difficile (strain 630) (Peptoclostridium difficile) protein is Ribonuclease Z.